An 87-amino-acid polypeptide reads, in one-letter code: UPF0250 protein NE1487 (87 aa).

The protein belongs to the UPF0250 family.

This chain is UPF0250 protein NE1487, found in Nitrosomonas europaea (strain ATCC 19718 / CIP 103999 / KCTC 2705 / NBRC 14298).